The sequence spans 854 residues: Fibronectin-binding protein PlpA (854 aa).

Low complexity predominate over residues 1–24 (MDNNQNNFNQPGQQGFDQYQQQSG). Positions 1 to 33 (MDNNQNNFNQPGQQGFDQYQQQSGALVSYGYDA) are disordered. The fibronectin-binding stretch occupies residues 91 to 109 (QYNQQQNQGYEQQYDEYGN). Disordered stretches follow at residues 247–327 (YEQE…LEAP), 411–434 (SSNN…EDSN), 743–766 (TINP…QLPP), and 835–854 (IQPS…YNNR). Positions 258–267 (EPAHEQDLRE) are enriched in basic and acidic residues. 2 stretches are compositionally biased toward polar residues: residues 311–320 (TVNQPDQTPI) and 411–428 (SSNN…TSNE). The stretch at 384–622 (NLEEIQKVKL…SSFQKALSEV (239 aa)) forms a coiled coil. Positions 746–764 (PPQPQPQALPQPHPQPQQL) are enriched in pro residues.

It localises to the cell membrane. In terms of biological role, binds immobilized fibronectin, specifically the gelatin/heparin-binding domain. The polypeptide is Fibronectin-binding protein PlpA (plpA) (Mycoplasmoides gallisepticum (strain R(low / passage 15 / clone 2)) (Mycoplasma gallisepticum)).